A 217-amino-acid polypeptide reads, in one-letter code: Eukaryotic translation initiation factor 4E (217 aa).

A compositionally biased stretch (low complexity) spans 1–11 (MATVEPETTPT). The interval 1–27 (MATVEPETTPTTNPPPAEEEKTESNQE) is disordered. Position 2 is an N-acetylalanine (Ala2). Thr22 carries the post-translational modification Phosphothreonine. The EIF4EBP1/2/3 binding stretch occupies residues 37–40 (HPLQ). Residue 56–57 (WQ) coordinates mRNA. The segment at 73–77 (WALYN) is EIF4EBP1/2/3 binding. An mRNA-binding site is contributed by 102–103 (WE). Residues 132 to 139 (ETLLCLIG) form an EIF4EBP1/2/3 binding region. MRNA-binding positions include 157–162 (RAKGDK) and 205–207 (TKS). Ser209 is subject to Phosphoserine; by PKC and MKNK2.

It belongs to the eukaryotic initiation factor 4E family. As to quaternary structure, eIF4F is a multi-subunit complex, the composition of which varies with external and internal environmental conditions. It is composed of at least EIF4A, EIF4E and EIF4G1/EIF4G3. EIF4E is also known to interact with other partners. Interacts with EIF4ENIF1/4E-T; promotes recruitment to P-bodies and import into the nucleus. Hypophosphorylated EIF4EBP1, EIF4EBP2 and EIF4EBP3 compete with EIF4G1/EIF4G3 to interact with EIF4E; insulin stimulated MAP-kinase (MAPK1 and MAPK3) phosphorylation of EIF4EBP1 causes dissociation of the complex allowing EIF4G1/EIF4G3 to bind and consequent initiation of translation. Interacts mutually exclusive with EIF4A1 or EIF4A2. Interacts with NGDN and PIWIL2. Component of the CYFIP1-EIF4E-FMR1 complex composed of CYFIP, EIF4E and FMR1. Interacts directly with CYFIP1. Interacts with CLOCK. Binds to MKNK2 in nucleus. Interacts with LIMD1, WTIP and AJUBA. Interacts with APOBEC3G in an RNA-dependent manner. Interacts with LARP1. Interacts with METTL3. Interacts with RBM24; this interaction prevents EIF4E from binding to p53/TP53 mRNA and inhibits the assembly of translation initiation complex. Interacts with DDX3X; interaction is direct and in an RNA-independent manner; this interaction enhances EIF4E cap-binding ability and is required for the repression of cap-dependent translation and the increase of IRES-mediated translation. DDX3X competes with EIF4G1 for interaction with EIF4E. Interacts with EIF4G1; which in a mutual exclusive interaction associates either with EIF1 or with EIF4E on a common binding site. Interacts with BTG4 and CNOT7. Interacts with LRPPRC (via N-terminus); the interaction promotes association of EIF4E with 4ESE-containing mRNAs. Interacts with mRNA cleavage enzyme CPSF3 and its cofactor CPSF1. Interacts (via RING-type zinc finger) with PML; the interaction results in conformational changes of both interacting proteins and reduces EIF4E affinity for the 5' m7G cap of mRNA, thus reducing EIF4E-mediated mRNA nuclear export. Interacts with homeobox protein HHEX/PRH; the interaction inhibits EIF4E-mediated mRNA nuclear export. Interacts with homeobox protein HOXA9; the interaction positively regulates EIF4E-mediated mRNA nuclear export. Interacts with homeobox protein EMX2. (Microbial infection) Interacts with murine norovirus viral genome-linked protein; this interaction plays a role in translation of viral proteins. Post-translationally, phosphorylation increases the ability of the protein to bind to mRNA caps and to form the eIF4F complex. Phosphorylation also enhances its mRNA transport function. Phosphorylation at Ser-209 is not essential for protein synthesis.

It is found in the cytoplasm. The protein localises to the P-body. The protein resides in the stress granule. Its subcellular location is the nucleus. It localises to the nucleus speckle. It is found in the nuclear body. Functionally, acts in the cytoplasm to initiate and regulate protein synthesis and is required in the nucleus for export of a subset of mRNAs from the nucleus to the cytoplasm which promotes processes such as RNA capping, processing and splicing. Component of the protein complex eIF4F, which is involved in the recognition of the mRNA cap, ATP-dependent unwinding of 5'-terminal secondary structure and recruitment of mRNA to the ribosome. This protein recognizes and binds the 7-methylguanosine (m7G)-containing mRNA cap during an early step in the initiation of protein synthesis and facilitates ribosome binding by inducing the unwinding of the mRNAs secondary structures. Together with EIF4G1, antagonizes the scanning promoted by EIF1-EIF4G1 and is required for TISU translation, a process where the TISU element recognition makes scanning unnecessary. In addition to its role in translation initiation, also acts as a regulator of translation and stability in the cytoplasm. Component of the CYFIP1-EIF4E-FMR1 complex which binds to the mRNA cap and mediates translational repression: in the complex, EIF4E mediates the binding to the mRNA cap. Component of a multiprotein complex that sequesters and represses translation of proneurogenic factors during neurogenesis. In P-bodies, component of a complex that mediates the storage of translationally inactive mRNAs in the cytoplasm and prevents their degradation. May play an important role in spermatogenesis through translational regulation of stage-specific mRNAs during germ cell development. As well as its roles in translation, also involved in mRNA nucleocytoplasmic transport. Its role in mRNA export from the nucleus to the cytoplasm relies on its ability to bind the m7G cap of RNAs and on the presence of the 50-nucleotide EIF4E sensitivity element (4ESE) in the 3'UTR of sensitive transcripts. Interaction with the 4ESE is mediated by LRPPRC which binds simultaneously to both EIF4E and the 4ESE, thereby acting as a platform for assembly for the RNA export complex. EIF4E-dependent mRNA export is independent of ongoing protein or RNA synthesis and is also NFX1-independent but is XPO1-dependent with LRPPRC interacting with XPO1 to form an EIF4E-dependent mRNA export complex. Alters the composition of the cytoplasmic face of the nuclear pore to promote RNA export by reducing RANBP2 expression, relocalizing nucleoporin NUP214 and increasing expression of RANBP1 and RNA export factors DDX19 and GLE1. Promotes the nuclear export of cyclin CCND1 mRNA. Promotes the nuclear export of NOS2/iNOS mRNA. Promotes the nuclear export of MDM2 mRNA. Also promotes the export of additional mRNAs, including others involved in the cell cycle. In the nucleus, binds to capped splice factor-encoding mRNAs and stimulates their nuclear export to enhance splice factor production by increasing their cytoplasmic availability to the translation machinery. May also regulate splicing through interaction with the spliceosome in an RNA and m7G cap-dependent manner. Also binds to some pre-mRNAs and may play a role in their recruitment to the spliceosome. Promotes steady-state capping of a subset of coding and non-coding RNAs by mediating nuclear export of capping machinery mRNAs including RNMT, RNGTT and RAMAC to enhance their translation. Stimulates mRNA 3'-end processing by promoting the expression of several core cleavage complex factors required for mRNA cleavage and polyadenylation, and may also have a direct effect through its interaction with the CPSF3 cleavage enzyme. Rescues cells from apoptosis by promoting activation of serine/threonine-protein kinase AKT1 through mRNA export of NBS1 which potentiates AKT1 phosphorylation and also through mRNA export of AKT1 effectors, allowing for increased production of these proteins. In Mus musculus (Mouse), this protein is Eukaryotic translation initiation factor 4E.